Reading from the N-terminus, the 937-residue chain is AP-2 complex subunit beta (937 aa).

Thr2 bears the N-acetylthreonine mark. Ser4 is modified (phosphoserine). N6-acetyllysine is present on Lys265. Tyr737 is modified (phosphotyrosine; by SRC). Residues Trp841–Asn937 are interaction with ARRB1. Phosphotyrosine is present on Tyr928.

Belongs to the adaptor complexes large subunit family. As to quaternary structure, adaptor protein complex 2 (AP-2) is a heterotetramer composed of two large adaptins (alpha-type subunit AP2A1 or AP2A2 and beta-type subunit AP2B1), a medium adaptin (mu-type subunit AP2M1) and a small adaptin (sigma-type subunit AP2S1). Interacts with EPN1. Interacts with EPS15; clathrin competes with EPS15. Interacts with SNAP91; clathrin competes with SNAP91. Interacts with CLTC; clathrin competes with EPS15, SNAP91 and PIP5K1C. Interacts with LDLRAP1. Interacts with AMPH and BIN1. Interacts with ARF6 (GDP-bound). Interacts (dephosphorylated at Tyr-737) with ARRB1; phosphorylation of AP2B1 at Tyr-737 disrupts the interaction. Interacts with SLC2A8. Interacts with SCYL1 and SCYL2. Interacts with TGFBR1 and TGFBR2. Interacts with PIP5K1C; clathrin competes with PIP5K1C. Interacts with DENND1B, but not with DENND1A, nor DENND1C. Interacts with FCHO1. Interacts with RFTN1. Interacts with KIAA1107. Together with AP2A1 or AP2A2 and AP2M1, it interacts with ADAM10; this interaction facilitates ADAM10 endocytosis from the plasma membrane during long-term potentiation in hippocampal neurons. In terms of processing, phosphorylation at Tyr-737 by SRC occurs at the plasma membrane in clathrin-coated vesicles (CCVs). Expressed in the brain (at protein level).

It localises to the cell membrane. Its subcellular location is the membrane. It is found in the coated pit. Functionally, component of the adaptor protein complex 2 (AP-2). Adaptor protein complexes function in protein transport via transport vesicles in different membrane traffic pathways. Adaptor protein complexes are vesicle coat components and appear to be involved in cargo selection and vesicle formation. AP-2 is involved in clathrin-dependent endocytosis in which cargo proteins are incorporated into vesicles surrounded by clathrin (clathrin-coated vesicles, CCVs) which are destined for fusion with the early endosome. The clathrin lattice serves as a mechanical scaffold but is itself unable to bind directly to membrane components. Clathrin-associated adaptor protein (AP) complexes which can bind directly to both the clathrin lattice and to the lipid and protein components of membranes are considered to be the major clathrin adaptors contributing the CCV formation. AP-2 also serves as a cargo receptor to selectively sort the membrane proteins involved in receptor-mediated endocytosis. AP-2 seems to play a role in the recycling of synaptic vesicle membranes from the presynaptic surface. AP-2 recognizes Y-X-X-[FILMV] (Y-X-X-Phi) and [ED]-X-X-X-L-[LI] endocytosis signal motifs within the cytosolic tails of transmembrane cargo molecules. AP-2 may also play a role in maintaining normal post-endocytic trafficking through the ARF6-regulated, non-clathrin pathway. During long-term potentiation in hippocampal neurons, AP-2 is responsible for the endocytosis of ADAM10. The AP-2 beta subunit acts via its C-terminal appendage domain as a scaffolding platform for endocytic accessory proteins; at least some clathrin-associated sorting proteins (CLASPs) are recognized by their [DE]-X(1,2)-F-X-X-[FL]-X-X-X-R motif. The AP-2 beta subunit binds to clathrin heavy chain, promoting clathrin lattice assembly; clathrin displaces at least some CLASPs from AP2B1 which probably then can be positioned for further coat assembly. The protein is AP-2 complex subunit beta (AP2B1) of Homo sapiens (Human).